The primary structure comprises 352 residues: Minor capsid protein VP2 (352 aa).

Gly2 carries the N-myristoyl glycine; by host lipid modification. The segment at Ser273–Pro308 is D1. The helical transmembrane segment at Ile290–Leu310 threads the bilayer. Residues Ala312–Ser352 form a disordered region. The segment at Tyr313 to Ser352 is DNA-binding. The Nuclear localization signal motif lies at Ala316–Met324. The span at Ser342–Ser352 shows a compositional bias: basic residues.

It belongs to the polyomaviruses capsid protein VP2 family. As to quaternary structure, forms homooligomers, and heterooligomers with VP3 in the endoplasmic reticulum membrane. Interacts (via D1 domain) with VP1. Interacts (via D1 domain) with VP1.

The protein localises to the virion. It localises to the host nucleus. The protein resides in the host endoplasmic reticulum. Its subcellular location is the host endoplasmic reticulum membrane. Functionally, structural protein that resides within the core of the capsid surrounded by 72 VP1 pentamers. Participates in host cell receptor binding together with VP1. Following virus endocytosis and trafficking to the endoplasmic reticulum, VP2 and VP3 form oligomers and integrate into the endoplasmic reticulum membrane. Heterooligomer VP2-VP3 may create a viroporin for transporting the viral genome across the endoplasmic reticulum membrane to the cytoplasm. Nuclear entry of the viral DNA involves the selective exposure and importin recognition of VP2 or VP3 nuclear localization signal (shared C-terminus). Plays a role in virion assembly within the nucleus in particular through a DNA-binding domain located in the C-terminal region. An N-terminal myristoylation suggests a scaffold function for virion assembly. In terms of biological role, structural protein that resides within the core of the capsid surrounded by 72 VP1 pentamers. Following virus endocytosis and trafficking to the endoplasmic reticulum, VP2 and VP3 form oligomers and integrate into the endoplasmic reticulum membrane. Heterooligomer VP2-VP3 may create a viroporin for transporting the viral genome across the endoplasmic reticulum membrane to the cytoplasm. Nuclear entry of the viral DNA involves the selective exposure and importin recognition of VP2 or VP3 nuclear localization signal (shared C-terminus). Plays a role in virion assembly within the nucleus. May participate in host cell lysis when associated with VP4. Its function is as follows. Viroporin inducing perforation of cellular membranes to trigger virus progeny release. Forms pores of 3 nm inner diameter. VP4 is expressed about 24 hours after the late structural proteins and is not incorporated into the mature virion. This chain is Minor capsid protein VP2, found in Simian virus 12 (strain wt100) (SV-12).